A 156-amino-acid polypeptide reads, in one-letter code: Small ribosomal subunit protein uS7 (156 aa).

The protein belongs to the universal ribosomal protein uS7 family. As to quaternary structure, part of the 30S ribosomal subunit. Contacts proteins S9 and S11.

Functionally, one of the primary rRNA binding proteins, it binds directly to 16S rRNA where it nucleates assembly of the head domain of the 30S subunit. Is located at the subunit interface close to the decoding center, probably blocks exit of the E-site tRNA. This Clostridium kluyveri (strain NBRC 12016) protein is Small ribosomal subunit protein uS7.